Here is a 46-residue protein sequence, read N- to C-terminus: Small polypeptide DEVIL 5 (46 aa).

Residues 8 to 24 form a helical membrane-spanning segment; it reads VGGTKRKMWSRGVGGVV. A required for DVL/RTFL small polypeptide activity region spans residues 15–46; it reads MWSRGVGGVVREQKAKLYIIRRCVVMLLCWHD.

It belongs to the DVL/RTFL small polypeptides family. Mostly expressed in roots and flowers, and, to a lower extent, in leaves and stems.

The protein resides in the cell membrane. Functionally, small polypeptide acting as a regulatory molecule which coordinates cellular responses required for differentiation, growth and development, including leaves shape, pedicule elongation, inflorescence organization and fruit maturation, probably by restricting polar cell proliferation in lateral organs and coordinating socket cell recruitment and differentiation at trichome sites. This is Small polypeptide DEVIL 5 from Arabidopsis thaliana (Mouse-ear cress).